A 570-amino-acid chain; its full sequence is Hydroxylamine reductase (570 aa).

Positions 5, 8, 17, and 23 each coordinate [4Fe-4S] cluster. Hybrid [4Fe-2O-2S] cluster is bound by residues His-266, Glu-290, Cys-334, Cys-425, Cys-453, Cys-478, Glu-513, and Lys-515. Cys-425 carries the post-translational modification Cysteine persulfide.

Belongs to the HCP family. [4Fe-4S] cluster is required as a cofactor. Hybrid [4Fe-2O-2S] cluster serves as cofactor.

It localises to the cytoplasm. The catalysed reaction is A + NH4(+) + H2O = hydroxylamine + AH2 + H(+). In terms of biological role, catalyzes the reduction of hydroxylamine to form NH(3) and H(2)O. The chain is Hydroxylamine reductase from Clostridium botulinum (strain ATCC 19397 / Type A).